Reading from the N-terminus, the 875-residue chain is Alanine--tRNA ligase (875 aa).

Residues histidine 564, histidine 568, cysteine 666, and histidine 670 each contribute to the Zn(2+) site.

It belongs to the class-II aminoacyl-tRNA synthetase family. As to quaternary structure, homotetramer. It depends on Zn(2+) as a cofactor.

Its subcellular location is the cytoplasm. The catalysed reaction is tRNA(Ala) + L-alanine + ATP = L-alanyl-tRNA(Ala) + AMP + diphosphate. Functionally, catalyzes the attachment of alanine to tRNA(Ala) in a two-step reaction: alanine is first activated by ATP to form Ala-AMP and then transferred to the acceptor end of tRNA(Ala). Also edits incorrectly charged Ser-tRNA(Ala) and Gly-tRNA(Ala) via its editing domain. This chain is Alanine--tRNA ligase, found in Pectobacterium atrosepticum (strain SCRI 1043 / ATCC BAA-672) (Erwinia carotovora subsp. atroseptica).